Reading from the N-terminus, the 238-residue chain is Purine nucleoside phosphorylase DeoD-type (238 aa).

Residue histidine 4 coordinates a purine D-ribonucleoside. Phosphate contacts are provided by residues glycine 20, arginine 24, arginine 43, and arginine 87–threonine 90. A purine D-ribonucleoside contacts are provided by residues glutamate 179–glutamate 181 and serine 203–asparagine 204.

It belongs to the PNP/UDP phosphorylase family. Homohexamer; trimer of homodimers.

The catalysed reaction is a purine D-ribonucleoside + phosphate = a purine nucleobase + alpha-D-ribose 1-phosphate. The enzyme catalyses a purine 2'-deoxy-D-ribonucleoside + phosphate = a purine nucleobase + 2-deoxy-alpha-D-ribose 1-phosphate. In terms of biological role, catalyzes the reversible phosphorolytic breakdown of the N-glycosidic bond in the beta-(deoxy)ribonucleoside molecules, with the formation of the corresponding free purine bases and pentose-1-phosphate. In Lacticaseibacillus casei (strain BL23) (Lactobacillus casei), this protein is Purine nucleoside phosphorylase DeoD-type.